The sequence spans 112 residues: Cytochrome c6 (112 aa).

Positions 1 to 25 are cleaved as a signal peptide; it reads MKTLLTILALTLVTLTTWLSTPAFA. Heme c is bound by residues C39, C42, H43, and M83.

It belongs to the cytochrome c family. PetJ subfamily. In terms of assembly, monomer. In terms of processing, binds 1 heme c group covalently per subunit.

The protein resides in the cellular thylakoid lumen. In terms of biological role, functions as an electron carrier between membrane-bound cytochrome b6-f and photosystem I in oxygenic photosynthesis. The sequence is that of Cytochrome c6 from Synechococcus sp. (strain ATCC 27167 / PCC 6312).